The chain runs to 492 residues: N-succinylglutamate 5-semialdehyde dehydrogenase (492 aa).

220–225 (GSASTG) contributes to the NAD(+) binding site. Active-site residues include Glu243 and Cys277.

It belongs to the aldehyde dehydrogenase family. AstD subfamily.

The catalysed reaction is N-succinyl-L-glutamate 5-semialdehyde + NAD(+) + H2O = N-succinyl-L-glutamate + NADH + 2 H(+). It participates in amino-acid degradation; L-arginine degradation via AST pathway; L-glutamate and succinate from L-arginine: step 4/5. Functionally, catalyzes the NAD-dependent reduction of succinylglutamate semialdehyde into succinylglutamate. The sequence is that of N-succinylglutamate 5-semialdehyde dehydrogenase from Salmonella schwarzengrund (strain CVM19633).